The following is a 297-amino-acid chain: Large ribosomal subunit protein uL18 (297 aa).

The span at 258 to 267 (KKAHPKKRWT) shows a compositional bias: basic residues. The segment at 258–277 (KKAHPKKRWTEKKLTREQRQ) is disordered. A compositionally biased stretch (basic and acidic residues) spans 268–277 (EKKLTREQRQ).

The protein belongs to the universal ribosomal protein uL18 family. Component of the large ribosomal subunit (LSU).

Its subcellular location is the cytoplasm. It is found in the nucleus. Functionally, component of the ribosome, a large ribonucleoprotein complex responsible for the synthesis of proteins in the cell. The small ribosomal subunit (SSU) binds messenger RNAs (mRNAs) and translates the encoded message by selecting cognate aminoacyl-transfer RNA (tRNA) molecules. The large subunit (LSU) contains the ribosomal catalytic site termed the peptidyl transferase center (PTC), which catalyzes the formation of peptide bonds, thereby polymerizing the amino acids delivered by tRNAs into a polypeptide chain. The nascent polypeptides leave the ribosome through a tunnel in the LSU and interact with protein factors that function in enzymatic processing, targeting, and the membrane insertion of nascent chains at the exit of the ribosomal tunnel. In Helianthus annuus (Common sunflower), this protein is Large ribosomal subunit protein uL18 (RPL5A).